We begin with the raw amino-acid sequence, 424 residues long: Adenylosuccinate synthetase (424 aa).

GTP contacts are provided by residues 12-18 (GDEGKGK) and 40-42 (GHT). Catalysis depends on aspartate 13, which acts as the Proton acceptor. Mg(2+) contacts are provided by aspartate 13 and glycine 40. IMP is bound by residues 13-16 (DEGK), 38-41 (NAGH), threonine 128, arginine 142, glutamine 223, threonine 238, and arginine 302. Residue histidine 41 is the Proton donor of the active site. 298-304 (TTTGRPR) contacts substrate. Residues arginine 304, 330-332 (HVD), and 412-414 (GVG) each bind GTP.

It belongs to the adenylosuccinate synthetase family. In terms of assembly, homodimer. Mg(2+) serves as cofactor.

Its subcellular location is the cytoplasm. It catalyses the reaction IMP + L-aspartate + GTP = N(6)-(1,2-dicarboxyethyl)-AMP + GDP + phosphate + 2 H(+). Its pathway is purine metabolism; AMP biosynthesis via de novo pathway; AMP from IMP: step 1/2. Its function is as follows. Plays an important role in the de novo pathway of purine nucleotide biosynthesis. Catalyzes the first committed step in the biosynthesis of AMP from IMP. The sequence is that of Adenylosuccinate synthetase from Acetivibrio thermocellus (strain ATCC 27405 / DSM 1237 / JCM 9322 / NBRC 103400 / NCIMB 10682 / NRRL B-4536 / VPI 7372) (Clostridium thermocellum).